We begin with the raw amino-acid sequence, 368 residues long: Cobalt-precorrin-5B C(1)-methyltransferase (368 aa).

The protein belongs to the CbiD family.

It carries out the reaction Co-precorrin-5B + S-adenosyl-L-methionine = Co-precorrin-6A + S-adenosyl-L-homocysteine. It functions in the pathway cofactor biosynthesis; adenosylcobalamin biosynthesis; cob(II)yrinate a,c-diamide from sirohydrochlorin (anaerobic route): step 6/10. Its function is as follows. Catalyzes the methylation of C-1 in cobalt-precorrin-5B to form cobalt-precorrin-6A. This chain is Cobalt-precorrin-5B C(1)-methyltransferase, found in Brucella canis (strain ATCC 23365 / NCTC 10854 / RM-666).